A 445-amino-acid chain; its full sequence is GTPase Der (445 aa).

EngA-type G domains lie at 3–167 (PVIA…NLPD) and 180–353 (IKLA…ASAN). GTP is bound by residues 9 to 16 (GRPNVGKS), 56 to 60 (DTGGF), 119 to 122 (NKAE), 186 to 193 (GRPNVGKS), 233 to 237 (DTAGL), and 298 to 301 (NKWD). The KH-like domain occupies 354–438 (RKMSTPVLTR…PLRIQLKSSV (85 aa)).

It belongs to the TRAFAC class TrmE-Era-EngA-EngB-Septin-like GTPase superfamily. EngA (Der) GTPase family. In terms of assembly, associates with the 50S ribosomal subunit.

GTPase that plays an essential role in the late steps of ribosome biogenesis. This is GTPase Der from Polaromonas naphthalenivorans (strain CJ2).